We begin with the raw amino-acid sequence, 285 residues long: Sulfotransferase 2A1 (285 aa).

The 3'-phosphoadenylyl sulfate site is built by Lys-44, Ser-45, Gly-46, Thr-47, Asn-48, and Trp-49. The active-site Proton acceptor is the His-99. Arg-121, Ser-129, Tyr-184, Ser-218, Met-223, Arg-247, Lys-248, and Gly-249 together coordinate 3'-phosphoadenylyl sulfate. Ser-251 is subject to Phosphoserine.

Belongs to the sulfotransferase 1 family. In terms of assembly, homodimer. In terms of tissue distribution, predominanly expressed in liver. Detected also in adrenal gland and in jejunum.

The protein resides in the cytoplasm. Its subcellular location is the cytosol. It carries out the reaction an alcohol + 3'-phosphoadenylyl sulfate = an alkyl sulfate + adenosine 3',5'-bisphosphate + H(+). The catalysed reaction is 3beta-hydroxyandrost-5-en-17-one + 3'-phosphoadenylyl sulfate = dehydroepiandrosterone 3-sulfate + adenosine 3',5'-bisphosphate + H(+). It catalyses the reaction taurolithocholate + 3'-phosphoadenylyl sulfate = taurolithocholate 3-sulfate + adenosine 3',5'-bisphosphate + H(+). The enzyme catalyses lithocholate + 3'-phosphoadenylyl sulfate = lithocholate sulfate + adenosine 3',5'-bisphosphate + H(+). It carries out the reaction (24S)-hydroxycholesterol + 3'-phosphoadenylyl sulfate = (24S)-hydroxycholesterol 24-sulfate + adenosine 3',5'-bisphosphate + H(+). The catalysed reaction is (24S)-hydroxycholesterol + 3'-phosphoadenylyl sulfate = (24S)-hydroxycholesterol 3-sulfate + adenosine 3',5'-bisphosphate + H(+). It catalyses the reaction (24S)-hydroxycholesterol 24-sulfate + 3'-phosphoadenylyl sulfate = (24S)-hydroxycholesterol 3,24-disulfate + adenosine 3',5'-bisphosphate + H(+). The enzyme catalyses pregnenolone + 3'-phosphoadenylyl sulfate = pregnenolone sulfate + adenosine 3',5'-bisphosphate + H(+). It carries out the reaction androsterone + 3'-phosphoadenylyl sulfate = androsterone 3alpha-sulfate + adenosine 3',5'-bisphosphate + H(+). Sulfotransferase that utilizes 3'-phospho-5'-adenylyl sulfate (PAPS) as sulfonate donor to catalyze the sulfonation of steroids and bile acids in the liver and adrenal glands. Mediates the sulfation of a wide range of steroids and sterols, including pregnenolone, androsterone, DHEA, bile acids, cholesterol and as well many xenobiotics that contain alcohol and phenol functional groups. Sulfonation increases the water solubility of most compounds, and therefore their renal excretion, but it can also result in bioactivation to form active metabolites. Plays an important role in maintening steroid and lipid homeostasis. Plays a key role in bile acid metabolism. In addition, catalyzes the metabolic activation of potent carcinogenic polycyclic arylmethanols. This is Sulfotransferase 2A1 (SULT2A1) from Macaca fascicularis (Crab-eating macaque).